The sequence spans 1128 residues: Transient receptor potential-gamma protein (1128 aa).

Residues 1-325 (MMEEENTIRP…MALQAVDIIR (325 aa)) are Cytoplasmic-facing. 2 ANK repeats span residues 57–86 (LGRT…DTKD) and 131–160 (PDIT…VLPM). The helical transmembrane segment at 326–346 (IGIMFPIFSLAYILAPYSSIG) threads the bilayer. Topologically, residues 347–403 (QTMRKPFIKFICHSASYFTFLFLLMLASQRIETFIGGWFFADSSGMLNTMEELPTKR) are extracellular. Residues 404–424 (GAKPTFIEWLILAWVSGLIWS) traverse the membrane as a helical segment. Residues 425 to 444 (EVKQLWDVGLQEYLNDMWNV) are Cytoplasmic-facing. A helical membrane pass occupies residues 445–465 (IDFVTNSLYVATVALRVVSFF). At 466-492 (QVQKEMIYNSHATDLPRERWDAWDPML) the chain is on the extracellular side. The helical transmembrane segment at 493-513 (ISEGLFSAANIFSSLKLVYIF) threads the bilayer. Residues 514–535 (SVNPHLGPLQVSLSRMVMDIMK) are Cytoplasmic-facing. Residues 536–556 (FFFLYVLVLFAFGSGLNQLLW) form a helical membrane-spanning segment. Residues 557 to 629 (YYADLEKKRC…GIKIFTRFWG (73 aa)) are Extracellular-facing. Residues 630 to 650 (MLMFGTYSVINIVVLLNLLIA) traverse the membrane as a helical segment. Over 651–1128 (MMNHSYQLIS…SCVSTTGAIG (478 aa)) the chain is Cytoplasmic. Disordered regions lie at residues 865–898 (RQQS…TASS) and 1064–1111 (AAEA…SVNS). A compositionally biased stretch (low complexity) spans 878 to 893 (ESPTTPTAPQGTQGAA). The span at 1085 to 1111 (TQSQHDSVETNSTFTLSIDPSNTSVNS) shows a compositional bias: polar residues.

It belongs to the transient receptor (TC 1.A.4) family. STrpC subfamily. As to quaternary structure, interacts preferentially with trpl and interacts to a lower extent with trp. Expressed predominantly in the rhabdomeres of photoreceptor cells.

The protein localises to the cell projection. The protein resides in the rhabdomere membrane. In terms of biological role, a light-sensitive calcium channel that is required for inositide-mediated Ca(2+) entry in the retina during phospholipase C (PLC)-mediated phototransduction. Forms a regulated cation channel when heteromultimerized with trpl. The protein is Transient receptor potential-gamma protein (Trpgamma) of Drosophila melanogaster (Fruit fly).